The primary structure comprises 126 residues: Histone H2B 1.1 (126 aa).

Residues 1-12 are compositionally biased toward low complexity; sequence MPEPAKSAPAPK. Residues 1–35 are disordered; that stretch reads MPEPAKSAPAPKKGSKKAVTKTQKKDGKKRRKSRK. N6-acetyllysine is present on residues Lys6 and Lys13. Residue Ser15 is modified to Phosphoserine. An N6-acetyllysine mark is found at Lys16 and Lys21. The O-linked (GlcNAc) serine glycan is linked to Ser113. A Glycyl lysine isopeptide (Lys-Gly) (interchain with G-Cter in ubiquitin) cross-link involves residue Lys121.

This sequence belongs to the histone H2B family. As to quaternary structure, the nucleosome is a histone octamer containing two molecules each of H2A, H2B, H3 and H4 assembled in one H3-H4 heterotetramer and two H2A-H2B heterodimers. The octamer wraps approximately 147 bp of DNA. Monoubiquitination of Lys-121 by BRE1 gives a specific tag for epigenetic transcriptional activation and is also prerequisite for histone H3 'Lys-4' and 'Lys-79' methylation. In terms of processing, phosphorylated on Ser-15 during developmentally programmed apoptosis; which may facilitate apoptotic chromatin condensation. Post-translationally, glcNAcylation at Ser-113 promotes monoubiquitination of Lys-121. It fluctuates in response to extracellular glucose, and associates with transcribed genes.

It localises to the nucleus. The protein localises to the chromosome. In terms of biological role, core component of nucleosome. Nucleosomes wrap and compact DNA into chromatin, limiting DNA accessibility to the cellular machineries which require DNA as a template. Histones thereby play a central role in transcription regulation, DNA repair, DNA replication and chromosomal stability. DNA accessibility is regulated via a complex set of post-translational modifications of histones, also called histone code, and nucleosome remodeling. The protein is Histone H2B 1.1 of Xenopus laevis (African clawed frog).